We begin with the raw amino-acid sequence, 673 residues long: Cyclic nucleotide-binding domain-containing protein 2 (673 aa).

The segment covering 1–15 (MNRSANPEAASSTSH) has biased composition (polar residues). A disordered region spans residues 1-89 (MNRSANPEAA…PQPKDRPGVQ (89 aa)). Basic and acidic residues predominate over residues 43–86 (PADKSDTTESKSESGSDSRSEEDKESPASIKEIKAETPQPKDRP). Residue 206-329 (CYRSYTESLQ…ETQYRYNFFR (124 aa)) coordinates a nucleoside 3',5'-cyclic phosphate.

In terms of tissue distribution, testis-specific. Exclusively expressed in testicular germ cells while it is not present in mature sperm (at protein level).

It localises to the cytoplasm. The protein resides in the cytosol. In terms of biological role, essential for male fertility. Plays an important role in spermatogenesis and regulates sperm motility by controlling the development of the flagellar bending of sperm. The chain is Cyclic nucleotide-binding domain-containing protein 2 (Cnbd2) from Mus musculus (Mouse).